Reading from the N-terminus, the 193-residue chain is Der GTPase-activating protein YihI (193 aa).

A compositionally biased stretch (basic residues) spans 1-12; sequence MSAKQPNRKPTG. Disordered stretches follow at residues 1 to 91 and 143 to 193; these read MSAK…KLVM and IIDN…PKKK. Residues 13 to 26 are compositionally biased toward basic and acidic residues; sequence KRKESDASALDGRE. The segment covering 27-36 has biased composition (basic residues); it reads RKRAAKRKGL. The span at 40-54 shows a compositional bias: polar residues; the sequence is SRQQAEQSSKNNNGK. Over residues 145-160 the composition is skewed to acidic residues; the sequence is DNDDDEEDDGSFDDAS. Over residues 184 to 193 the composition is skewed to basic and acidic residues; the sequence is PEPKPEPKKK.

It belongs to the YihI family. In terms of assembly, interacts with Der.

A GTPase-activating protein (GAP) that modifies Der/EngA GTPase function. May play a role in ribosome biogenesis. This Aeromonas salmonicida (strain A449) protein is Der GTPase-activating protein YihI.